Reading from the N-terminus, the 411-residue chain is 2,3-bisphosphoglycerate-independent phosphoglycerate mutase (411 aa).

This sequence belongs to the BPG-independent phosphoglycerate mutase family. A-PGAM subfamily.

It catalyses the reaction (2R)-2-phosphoglycerate = (2R)-3-phosphoglycerate. It functions in the pathway carbohydrate degradation; glycolysis; pyruvate from D-glyceraldehyde 3-phosphate: step 3/5. Functionally, catalyzes the interconversion of 2-phosphoglycerate and 3-phosphoglycerate. This is 2,3-bisphosphoglycerate-independent phosphoglycerate mutase from Thermococcus gammatolerans (strain DSM 15229 / JCM 11827 / EJ3).